The following is a 425-amino-acid chain: DNA replication and repair protein RecF (425 aa).

30–37 (GPNGHGKT) contributes to the ATP binding site.

The protein belongs to the RecF family.

Its subcellular location is the cytoplasm. In terms of biological role, the RecF protein is involved in DNA metabolism; it is required for DNA replication and normal SOS inducibility. RecF binds preferentially to single-stranded, linear DNA. It also seems to bind ATP. The polypeptide is DNA replication and repair protein RecF (Corynebacterium jeikeium (strain K411)).